We begin with the raw amino-acid sequence, 448 residues long: Receptor homology region, transmembrane domain- and RING domain-containing protein 2 (448 aa).

An N-terminal signal peptide occupies residues 1–20; that stretch reads MNRALVLLLYVCTVSCLASS. At 21 to 163 the chain is on the lumenal side; the sequence is KVILMRNNIT…IPSFENSAWS (143 aa). N-linked (GlcNAc...) asparagine glycans are attached at residues Asn28 and Asn74. The PA domain occupies 60-144; sequence DACQNLMNKP…ETGEVLKEYA (85 aa). A disulfide bond links Cys62 and Cys87. The helical transmembrane segment at 164–184 threads the bilayer; that stretch reads IMAVSFISLLAMSAVLATCFF. Over 185-448 the chain is Cytoplasmic; sequence VRRHRIRRRT…YASANSLPDC (264 aa). An RING-type; atypical zinc finger spans residues 232 to 274; sequence CAICLEDYTVGDKLRLLPCCHKFHAACVDSWLTSWRTFCPVCK. Low complexity predominate over residues 344–378; the sequence is QSSSNRRSPPISVSRSSVDLRQQAASPSPSPSQRS. Disordered regions lie at residues 344–380 and 402–424; these read QSSS…RSYI and MSPY…NYPL. The span at 408–423 shows a compositional bias: polar residues; the sequence is SPSNASPAMAGSSNYP.

The protein resides in the protein storage vacuole membrane. It is found in the golgi apparatus membrane. In terms of biological role, involved in the trafficking of vacuolar proteins. May function as a sorting receptor for protein trafficking to the protein storage vacuole (PSV). The sequence is that of Receptor homology region, transmembrane domain- and RING domain-containing protein 2 (RMR2) from Arabidopsis thaliana (Mouse-ear cress).